The primary structure comprises 153 residues: Small ribosomal subunit protein eS19 (153 aa).

It belongs to the eukaryotic ribosomal protein eS19 family. Part of the 30S ribosomal subunit.

Functionally, may be involved in maturation of the 30S ribosomal subunit. The protein is Small ribosomal subunit protein eS19 of Aeropyrum pernix (strain ATCC 700893 / DSM 11879 / JCM 9820 / NBRC 100138 / K1).